Consider the following 93-residue polypeptide: Small ribosomal subunit protein bS20 (93 aa).

Residues 1 to 18 (MPLHKSAEKRLRQSEKRN) show a composition bias toward basic and acidic residues. A disordered region spans residues 1-25 (MPLHKSAEKRLRQSEKRNARNRARK).

Belongs to the bacterial ribosomal protein bS20 family.

Binds directly to 16S ribosomal RNA. This is Small ribosomal subunit protein bS20 from Chlorobium chlorochromatii (strain CaD3).